The following is a 974-amino-acid chain: Pentatricopeptide repeat-containing protein At5g61990, mitochondrial (974 aa).

Residues 1–31 constitute a mitochondrion transit peptide; the sequence is MMGSMLFRKRTLVTRANFLLFRSFSVNVEKL. PPR repeat units follow at residues 96–130, 150–184, 185–219, 220–250, 257–275, 276–310, 311–345, 346–380, 381–415, 416–450, 451–485, 486–520, 521–555, 556–590, 591–625, 626–660, 661–695, 696–730, 731–761, 765–799, 804–838, 839–873, 874–908, and 914–948; these read KLDS…NWPV, DGVL…ELVP, RLSR…NVVF, DVKT…TEKE, NVDG…GLVP, LKYT…GVSL, DNHT…GINI, KPYM…GLIP, QAQA…NIVI, SPYT…GCRP, NVVI…GIAP, DIFC…GLKP, NAFT…GVLP, NKVL…GILG, DAKT…GIAP, DVFS…GLTP, NVII…GLHP, NAVT…GLVP, DSFV…NKKG, STAP…SFDR, NDVT…NLMP, TVIT…GIEP, DHIM…NAVD, and SIST…QYIP.

The protein belongs to the PPR family. P subfamily.

It is found in the mitochondrion. The polypeptide is Pentatricopeptide repeat-containing protein At5g61990, mitochondrial (Arabidopsis thaliana (Mouse-ear cress)).